The chain runs to 102 residues: Iron-sulfur cluster assembly protein CyaY (102 aa).

This sequence belongs to the frataxin family.

Involved in iron-sulfur (Fe-S) cluster assembly. May act as a regulator of Fe-S biogenesis. This chain is Iron-sulfur cluster assembly protein CyaY, found in Histophilus somni (strain 129Pt) (Haemophilus somnus).